A 118-amino-acid polypeptide reads, in one-letter code: NADH-quinone oxidoreductase subunit A (118 aa).

A run of 3 helical transmembrane segments spans residues 5–25, 61–81, and 90–110; these read YLGI…AFAV, FLYA…YPWA, and FAIV…WYAW.

The protein belongs to the complex I subunit 3 family. NDH-1 is composed of 14 different subunits. Subunits NuoA, H, J, K, L, M, N constitute the membrane sector of the complex.

Its subcellular location is the cell membrane. It carries out the reaction a quinone + NADH + 5 H(+)(in) = a quinol + NAD(+) + 4 H(+)(out). Functionally, NDH-1 shuttles electrons from NADH, via FMN and iron-sulfur (Fe-S) centers, to quinones in the respiratory chain. The immediate electron acceptor for the enzyme in this species is believed to be a menaquinone. Couples the redox reaction to proton translocation (for every two electrons transferred, four hydrogen ions are translocated across the cytoplasmic membrane), and thus conserves the redox energy in a proton gradient. This is NADH-quinone oxidoreductase subunit A from Heliobacterium modesticaldum (strain ATCC 51547 / Ice1).